The primary structure comprises 309 residues: Hydroxyacylglutathione hydrolase, mitochondrial (309 aa).

The transit peptide at M1–G24 directs the protein to the mitochondrion. The residue at position 90 (K90) is an N6-acetyllysine. Positions 103, 105, 107, and 108 each coordinate Zn(2+). K117 carries the N6-acetyllysine modification. H159 and D183 together coordinate Zn(2+). Residues K192 to Y194 and H222 to Y224 contribute to the substrate site. Residue H222 participates in Zn(2+) binding. K230 carries the N6-acetyllysine; alternate modification. Residue K230 is modified to N6-succinyllysine; alternate. R298–K301 contacts substrate.

The protein belongs to the metallo-beta-lactamase superfamily. Glyoxalase II family. In terms of assembly, monomer. Zn(2+) serves as cofactor.

Its subcellular location is the mitochondrion matrix. The protein localises to the cytoplasm. It carries out the reaction an S-(2-hydroxyacyl)glutathione + H2O = a 2-hydroxy carboxylate + glutathione + H(+). It catalyses the reaction (R)-S-lactoylglutathione + H2O = (R)-lactate + glutathione + H(+). It functions in the pathway secondary metabolite metabolism; methylglyoxal degradation; (R)-lactate from methylglyoxal: step 2/2. Its function is as follows. Thiolesterase that catalyzes the hydrolysis of S-D-lactoyl-glutathione to form glutathione and D-lactic acid. This chain is Hydroxyacylglutathione hydrolase, mitochondrial (Hagh), found in Mus musculus (Mouse).